Here is a 669-residue protein sequence, read N- to C-terminus: Matrix metalloproteinase-15 (669 aa).

The or 45 signal peptide spans 1 to 41 (MGSDPSAPGRPGWTGSLLGDREEAARPRLLPLLLVLLGCLG). The propeptide occupies 42-131 (LGVAAEDAEV…KANLRRRRKR (90 aa)). A Cysteine switch motif is present at residues 109–116 (PRCGVPDQ). C111 serves as a coordination point for Zn(2+). Topologically, residues 132–625 (YALTGRKWNN…QMEEVARTVN (494 aa)) are extracellular. N150 is a glycosylation site (N-linked (GlcNAc...) asparagine). A Zn(2+)-binding site is contributed by H259. The active site involves E260. Positions 263 and 269 each coordinate Zn(2+). Residues 300–370 (QQLYGTPDGQ…RPDQYGPNIC (71 aa)) are disordered. Residues 305–322 (TPDGQPQPTQPLPTVTPR) show a composition bias toward low complexity. The segment covering 333-342 (RPPQPPPPGG) has biased composition (pro residues). 4 Hemopexin repeats span residues 367 to 415 (PNIC…WRGL), 416 to 461 (PGDI…GLGI), 463 to 511 (YDRI…QGIP), and 512 to 559 (ASPK…FMGC). The cysteines at positions 370 and 559 are disulfide-linked. The interval 574–593 (RPPFNPHGGAEPGADSAEGD) is disordered. S589 is subject to Phosphoserine. The chain crosses the membrane as a helical span at residues 626-646 (VVMVLVPLLLLLCVLGLTYAL). At 647–669 (VQMQRKGAPRVLLYCKRSLQEWV) the chain is on the cytoplasmic side.

Belongs to the peptidase M10A family. Zn(2+) serves as cofactor. The cofactor is Ca(2+). The precursor is cleaved by a furin endopeptidase. As to expression, appeared to be synthesized preferentially in liver, placenta, testis, colon and intestine. Substantial amounts are also detected in pancreas, kidney, lung, heart and skeletal muscle.

Its subcellular location is the membrane. Its function is as follows. Endopeptidase that degrades various components of the extracellular matrix. May activate progelatinase A. This chain is Matrix metalloproteinase-15 (MMP15), found in Homo sapiens (Human).